The primary structure comprises 185 residues: CASP-like protein 2C1 (185 aa).

Over 1–12 (MVAARVSEVKAE) the chain is Cytoplasmic. The chain crosses the membrane as a helical span at residues 13 to 33 (GVLRGACAALAAAAALLVGLS). Topologically, residues 34 to 52 (TQTETVLLVRKKATVKDVQ) are extracellular. Residues 53 to 73 (ALWVLAMAAAAAAGYHLLQLL) form a helical membrane-spanning segment. The Cytoplasmic segment spans residues 74–105 (KCFYLGRRVGGGASPCRRSSRALAWTCLLLDK). Residues 106–126 (ACAYTTFATTVAAAQACVIAL) form a helical membrane-spanning segment. Residues 127 to 147 (DGAHALQWTKLCNIYTRFCEQ) are Extracellular-facing. Residues 148 to 168 (IAGSLVLGMLAAVGTAVLSAA) traverse the membrane as a helical segment. At 169–185 (SARNVFRHYSPGTYAAH) the chain is on the cytoplasmic side.

The protein belongs to the Casparian strip membrane proteins (CASP) family. As to quaternary structure, homodimer and heterodimers.

It localises to the cell membrane. This chain is CASP-like protein 2C1, found in Sorghum bicolor (Sorghum).